Reading from the N-terminus, the 223-residue chain is Sporulation-specific protein 19 (223 aa).

The signal sequence occupies residues 1–20 (MKKQILIVAAQSILCSTVFG). The GPI-anchor amidated asparagine moiety is linked to residue Asn-198. The propeptide at 199–223 (ASNFLTPTTVALAVLLTILLFIQAY) is removed in mature form.

In terms of processing, the GPI-anchor is attached to the protein in the endoplasmic reticulum and serves to target the protein to the cell surface. There, the glucosamine-inositol phospholipid moiety is cleaved off and the GPI-modified mannoprotein is covalently attached via its lipidless GPI glycan remnant to the 1,6-beta-glucan of the outer cell wall layer.

It is found in the secreted. Its subcellular location is the cell wall. The protein localises to the membrane. Functionally, involved in sporulation. Essential for completion of the nuclear division. This chain is Sporulation-specific protein 19 (SPO19), found in Saccharomyces cerevisiae (strain ATCC 204508 / S288c) (Baker's yeast).